The sequence spans 428 residues: Enolase (428 aa).

(2R)-2-phosphoglycerate is bound at residue Gln173. Glu217 (proton donor) is an active-site residue. Residues Asp253, Glu294, and Asp320 each contribute to the Mg(2+) site. (2R)-2-phosphoglycerate-binding residues include Lys345, Arg374, Ser375, and Lys396. Lys345 acts as the Proton acceptor in catalysis.

This sequence belongs to the enolase family. Mg(2+) is required as a cofactor.

Its subcellular location is the cytoplasm. The protein localises to the secreted. It localises to the cell surface. It carries out the reaction (2R)-2-phosphoglycerate = phosphoenolpyruvate + H2O. The protein operates within carbohydrate degradation; glycolysis; pyruvate from D-glyceraldehyde 3-phosphate: step 4/5. Catalyzes the reversible conversion of 2-phosphoglycerate (2-PG) into phosphoenolpyruvate (PEP). It is essential for the degradation of carbohydrates via glycolysis. The sequence is that of Enolase from Methanosarcina mazei (strain ATCC BAA-159 / DSM 3647 / Goe1 / Go1 / JCM 11833 / OCM 88) (Methanosarcina frisia).